We begin with the raw amino-acid sequence, 194 residues long: Clathrin light chain (194 aa).

The segment at 44-156 is disordered; sequence TTFDNSNNNN…TDSTSGNTTH (113 aa). Residues 48-65 show a composition bias toward low complexity; it reads NSNNNNNNNNHNNNSYNS. 2 stretches are compositionally biased toward basic and acidic residues: residues 89–115 and 124–146; these read EYLE…KIAE and YSER…KSLE. Residues 124–194 are required for binding clathrin heavy chain, localization to punctae, and for cytokinesis and fruiting body development; it reads YSEREAKKKT…LIRLKNQPIV (71 aa). Residues 147 to 156 are compositionally biased toward polar residues; sequence TDSTSGNTTH.

This sequence belongs to the clathrin light chain family. In terms of assembly, clathrin coats are formed from molecules containing 3 heavy chains and 3 light chains.

Its subcellular location is the cytoplasmic vesicle membrane. The protein localises to the membrane. It is found in the coated pit. Functionally, clathrin is the major protein of the polyhedral coat of coated pits and vesicles. This is Clathrin light chain (clc) from Dictyostelium discoideum (Social amoeba).